A 399-amino-acid chain; its full sequence is P2X purinoceptor 1 (399 aa).

Residues 1-28 lie on the Cytoplasmic side of the membrane; sequence MARRLQDELSAFFFEYDTPRMVLVRNKK. Residues 29–50 form a helical membrane-spanning segment; that stretch reads VGVIFRLIQLVVLVYVIGWVFV. Over 51–338 the chain is Extracellular; sequence YEKGYQTSSD…IPTMTTIGSG (288 aa). CTP-binding residues include Lys-68, Lys-70, and Lys-140. Lys-70 lines the ATP pocket. 3 cysteine pairs are disulfide-bonded: Cys-117–Cys-165, Cys-126–Cys-149, and Cys-132–Cys-159. Asn-153 and Asn-184 each carry an N-linked (GlcNAc...) asparagine glycan. Residue Thr-186 coordinates CTP. Thr-186 provides a ligand contact to ATP. A glycan (N-linked (GlcNAc...) asparagine) is linked at Asn-210. 2 disulfides stabilise this stretch: Cys-217–Cys-227 and Cys-261–Cys-270. ATP contacts are provided by Ser-286, Asn-290, and Arg-292. The CTP site is built by Asn-290 and Arg-292. Asn-300 carries an N-linked (GlcNAc...) asparagine glycan. Lys-309 contributes to the CTP binding site. An ATP-binding site is contributed by Lys-309. A pore-forming motif region spans residues 331 to 338; the sequence is TMTTIGSG. A helical membrane pass occupies residues 339 to 358; it reads IGIFGVATVLCDLLLLHILP. Residues 359-399 lie on the Cytoplasmic side of the membrane; sequence KRHYYKQKKFKYAEDMGPGEGEHDPVATSSTLGLQENMRTS. A disordered region spans residues 374-399; sequence MGPGEGEHDPVATSSTLGLQENMRTS. A compositionally biased stretch (polar residues) spans 385-399; it reads ATSSTLGLQENMRTS. 2 positions are modified to phosphoserine: Ser-387 and Ser-388. Thr-389 carries the post-translational modification Phosphothreonine.

This sequence belongs to the P2X receptor family. Functional P2XRs are organized as homomeric and heteromeric trimers. Homotrimer. Forms heterodimer with P2RX2. Forms heterodimer with P2RX4. Forms heterodimer with P2RX5. As to expression, high levels in vas deferens and urinary bladder. Lower extent in spinal cord, coeliac ganglion, lung and spleen (probably in the smooth muscle part of both organs).

The protein localises to the cell membrane. It carries out the reaction Ca(2+)(in) = Ca(2+)(out). The enzyme catalyses K(+)(in) = K(+)(out). It catalyses the reaction Na(+)(in) = Na(+)(out). With respect to regulation, activated by low concentrations of ATP (&lt;1 uM). Undergoes rapid desensitisation. Sensitives to the ATP agonist:alpha/beta-methylene-ATP. Modulated by cholesterol. In terms of biological role, ATP-gated nonselective transmembrane cation channel permeable to potassium, sodium and with relatively high calcium permeability. Furthermore, CTP functions as a weak affinity agonist for P2RX1. Plays a role a role in urogenital, immune and cardiovascular function. Specifically, plays an important role in neurogenic contraction of smooth muscle of the vas deferens, and therefore is essential for normal male reproductive function. In addition, contributes to smooth muscle contractions of the urinary bladder. On platelets, contributes to platelet activation and aggregation and thereby, also to thrombosis. On neutrophils, it is involved in chemotaxis and in mitigating the activation of circulating cells. The sequence is that of P2X purinoceptor 1 (P2rx1) from Rattus norvegicus (Rat).